Here is an 83-residue protein sequence, read N- to C-terminus: Putative membrane protein insertion efficiency factor (83 aa).

This sequence belongs to the UPF0161 family.

It localises to the cell membrane. Functionally, could be involved in insertion of integral membrane proteins into the membrane. This is Putative membrane protein insertion efficiency factor from Streptococcus thermophilus (strain ATCC BAA-250 / LMG 18311).